Reading from the N-terminus, the 102-residue chain is Small ribosomal subunit protein uS10 (102 aa).

This sequence belongs to the universal ribosomal protein uS10 family. In terms of assembly, part of the 30S ribosomal subunit.

Functionally, involved in the binding of tRNA to the ribosomes. The chain is Small ribosomal subunit protein uS10 from Treponema pallidum (strain Nichols).